A 387-amino-acid chain; its full sequence is Succinate--CoA ligase [ADP-forming] subunit beta (387 aa).

Residues 9 to 236 (RDLFESYGVP…AAAADPLEAK (228 aa)) form the ATP-grasp domain. Residues K45, 52–54 (GRG), A94, and E99 contribute to the ATP site. Residues N191 and D205 each contribute to the Mg(2+) site. Substrate is bound by residues N256 and 318–320 (GIT).

It belongs to the succinate/malate CoA ligase beta subunit family. Heterotetramer of two alpha and two beta subunits. It depends on Mg(2+) as a cofactor.

It carries out the reaction succinate + ATP + CoA = succinyl-CoA + ADP + phosphate. The enzyme catalyses GTP + succinate + CoA = succinyl-CoA + GDP + phosphate. It functions in the pathway carbohydrate metabolism; tricarboxylic acid cycle; succinate from succinyl-CoA (ligase route): step 1/1. Its function is as follows. Succinyl-CoA synthetase functions in the citric acid cycle (TCA), coupling the hydrolysis of succinyl-CoA to the synthesis of either ATP or GTP and thus represents the only step of substrate-level phosphorylation in the TCA. The beta subunit provides nucleotide specificity of the enzyme and binds the substrate succinate, while the binding sites for coenzyme A and phosphate are found in the alpha subunit. The protein is Succinate--CoA ligase [ADP-forming] subunit beta of Clavibacter michiganensis subsp. michiganensis (strain NCPPB 382).